A 448-amino-acid chain; its full sequence is Exodeoxyribonuclease 7 large subunit (448 aa).

Belongs to the XseA family. In terms of assembly, heterooligomer composed of large and small subunits.

It is found in the cytoplasm. The catalysed reaction is Exonucleolytic cleavage in either 5'- to 3'- or 3'- to 5'-direction to yield nucleoside 5'-phosphates.. Bidirectionally degrades single-stranded DNA into large acid-insoluble oligonucleotides, which are then degraded further into small acid-soluble oligonucleotides. This Shewanella baltica (strain OS223) protein is Exodeoxyribonuclease 7 large subunit.